A 648-amino-acid chain; its full sequence is Biosynthetic arginine decarboxylase (648 aa).

Lys109 bears the N6-(pyridoxal phosphate)lysine mark. 291-301 (IDVGGGLGIDF) serves as a coordination point for substrate.

Belongs to the Orn/Lys/Arg decarboxylase class-II family. SpeA subfamily. The cofactor is Mg(2+). Pyridoxal 5'-phosphate is required as a cofactor.

It catalyses the reaction L-arginine + H(+) = agmatine + CO2. It participates in amine and polyamine biosynthesis; agmatine biosynthesis; agmatine from L-arginine: step 1/1. Its function is as follows. Catalyzes the biosynthesis of agmatine from arginine. In Prochlorococcus marinus (strain MIT 9215), this protein is Biosynthetic arginine decarboxylase.